A 369-amino-acid polypeptide reads, in one-letter code: Saccharopine dehydrogenase [NAD(+), L-lysine-forming] (369 aa).

Positions 19 and 78 each coordinate L-saccharopine. The active-site Proton acceptor is the lysine 78. Histidine 96 serves as the catalytic Proton donor. Residue glutamine 101 participates in L-saccharopine binding. Arginine 130 is a binding site for NAD(+). Residues arginine 131 and phenylalanine 135 each contribute to the L-saccharopine site. Residues 203 to 204 (GR), aspartate 227, threonine 231, tyrosine 251, and valine 278 contribute to the NAD(+) site. A disulfide bond links cysteine 205 and cysteine 249. 279–281 (SAD) is a binding site for L-saccharopine. Residue 318 to 321 (IDHL) coordinates NAD(+).

The protein belongs to the AlaDH/PNT family. Monomer.

The enzyme catalyses L-saccharopine + NAD(+) + H2O = L-lysine + 2-oxoglutarate + NADH + H(+). The protein operates within amino-acid biosynthesis; L-lysine biosynthesis via AAA pathway; L-lysine from L-alpha-aminoadipate (fungal route): step 3/3. Its function is as follows. Catalyzes the NAD(+)-dependent cleavage of saccharopine to L-lysine and 2-oxoglutarate, the final step in the alpha-aminoadipate (AAA) pathway for lysin biosynthesis. The polypeptide is Saccharopine dehydrogenase [NAD(+), L-lysine-forming] (Yarrowia lipolytica (strain CLIB 122 / E 150) (Yeast)).